A 386-amino-acid chain; its full sequence is Succinyl-diaminopimelate desuccinylase (386 aa).

His76 provides a ligand contact to Zn(2+). The active site involves Asp78. Residue Asp110 coordinates Zn(2+). The active-site Proton acceptor is Glu144. Glu145, Glu173, and His359 together coordinate Zn(2+).

This sequence belongs to the peptidase M20A family. DapE subfamily. In terms of assembly, homodimer. Zn(2+) is required as a cofactor. The cofactor is Co(2+).

The enzyme catalyses N-succinyl-(2S,6S)-2,6-diaminopimelate + H2O = (2S,6S)-2,6-diaminopimelate + succinate. It participates in amino-acid biosynthesis; L-lysine biosynthesis via DAP pathway; LL-2,6-diaminopimelate from (S)-tetrahydrodipicolinate (succinylase route): step 3/3. Functionally, catalyzes the hydrolysis of N-succinyl-L,L-diaminopimelic acid (SDAP), forming succinate and LL-2,6-diaminopimelate (DAP), an intermediate involved in the bacterial biosynthesis of lysine and meso-diaminopimelic acid, an essential component of bacterial cell walls. The polypeptide is Succinyl-diaminopimelate desuccinylase (Chromohalobacter salexigens (strain ATCC BAA-138 / DSM 3043 / CIP 106854 / NCIMB 13768 / 1H11)).